Here is a 134-residue protein sequence, read N- to C-terminus: uncharacterized protein (134 aa).

The protein localises to the mitochondrion. This is an uncharacterized protein from Saccharomyces cerevisiae (strain ATCC 204508 / S288c) (Baker's yeast).